Consider the following 108-residue polypeptide: Cell division topological specificity factor (108 aa).

The protein belongs to the MinE family.

Prevents the cell division inhibition by proteins MinC and MinD at internal division sites while permitting inhibition at polar sites. This ensures cell division at the proper site by restricting the formation of a division septum at the midpoint of the long axis of the cell. The polypeptide is Cell division topological specificity factor (Prochlorococcus marinus (strain AS9601)).